A 447-amino-acid polypeptide reads, in one-letter code: UPF0210 protein LCK_00974 (447 aa).

This sequence belongs to the UPF0210 family. As to quaternary structure, homodimer.

The chain is UPF0210 protein LCK_00974 from Leuconostoc citreum (strain KM20).